A 194-amino-acid chain; its full sequence is 7-methyl-GTP pyrophosphatase (194 aa).

The Proton acceptor role is filled by D69.

This sequence belongs to the Maf family. YceF subfamily. The cofactor is a divalent metal cation.

The protein resides in the cytoplasm. It catalyses the reaction N(7)-methyl-GTP + H2O = N(7)-methyl-GMP + diphosphate + H(+). Functionally, nucleoside triphosphate pyrophosphatase that hydrolyzes 7-methyl-GTP (m(7)GTP). May have a dual role in cell division arrest and in preventing the incorporation of modified nucleotides into cellular nucleic acids. The chain is 7-methyl-GTP pyrophosphatase (yceF1) from Shigella boydii serotype 4 (strain Sb227).